The sequence spans 450 residues: Acyltransferase GLAUCE (450 aa).

Active-site proton acceptor residues include His-171 and Glu-394.

Belongs to the plant acyltransferase family. In terms of tissue distribution, restricted to the central cells of embryo sacs.

The protein localises to the cytoplasm. It localises to the nucleus. Required for double fertilization of the egg cell and the central cell by two sperm cells, resulting in the formation of the embryo and the endosperm. Involved in the regulation of embryonic expression of PHE1. Essential in maternal tissues to ensure the paternal embryonic expression of several genes, including RPS5a and FAC1, both of which being essential for early embryo and endosperm development in fertilized seeds. The protein is Acyltransferase GLAUCE of Arabidopsis thaliana (Mouse-ear cress).